Here is a 230-residue protein sequence, read N- to C-terminus: Large ribosomal subunit protein uL1 (230 aa).

The protein belongs to the universal ribosomal protein uL1 family. Part of the 50S ribosomal subunit.

Binds directly to 23S rRNA. The L1 stalk is quite mobile in the ribosome, and is involved in E site tRNA release. In terms of biological role, protein L1 is also a translational repressor protein, it controls the translation of the L11 operon by binding to its mRNA. The polypeptide is Large ribosomal subunit protein uL1 (Acidithiobacillus ferrooxidans (strain ATCC 53993 / BNL-5-31) (Leptospirillum ferrooxidans (ATCC 53993))).